The sequence spans 214 residues: tRNA (guanine-N(7)-)-methyltransferase (214 aa).

The S-adenosyl-L-methionine site is built by E43, E68, D95, and D117. D117 is a catalytic residue. Substrate contacts are provided by residues K121, D153, and 190–193 (TEYE).

This sequence belongs to the class I-like SAM-binding methyltransferase superfamily. TrmB family.

The catalysed reaction is guanosine(46) in tRNA + S-adenosyl-L-methionine = N(7)-methylguanosine(46) in tRNA + S-adenosyl-L-homocysteine. It participates in tRNA modification; N(7)-methylguanine-tRNA biosynthesis. Its function is as follows. Catalyzes the formation of N(7)-methylguanine at position 46 (m7G46) in tRNA. The chain is tRNA (guanine-N(7)-)-methyltransferase from Staphylococcus aureus (strain JH1).